A 202-amino-acid chain; its full sequence is MHVTQSSSAITPGQTAELYPGDIKSVLLTAEQIQARIAELGEQIGNDYRELSATTGQDLLLITVLKGAVLFVTDLARAIPVPTQFEFMAVSSYGSSTSSSGVVRILKDLDRDIHGRDVLIVEDVVDSGLTLSWLSRNLTSRNPRSLRVCTLLRKPDAVHANVEIAYVGFDIPNDFVVGYGLDYDERYRDLSYIGTLDPRVYQ.

Diphosphate is bound by residues lysine 66 and glycine 67. The Mg(2+) site is built by glutamate 122 and aspartate 123. Catalysis depends on aspartate 126, which acts as the Proton acceptor. Residues lysine 154, 175-176, and aspartate 182 each bind GMP; that span reads FV. Arginine 188 is a diphosphate binding site.

The protein belongs to the purine/pyrimidine phosphoribosyltransferase family. Homodimer and homotetramer in equilibrium. The presence or absence of divalent metal ions, as well as phosphate, can affect the oligomerization state of the enzyme. Likely functions as a tetramer (rather than a dimer) in its biological environment, which is the most active form. The dimeric structure is also active though ~50% of that of the tetramer. Mg(2+) serves as cofactor.

The protein localises to the cytoplasm. It catalyses the reaction IMP + diphosphate = hypoxanthine + 5-phospho-alpha-D-ribose 1-diphosphate. The enzyme catalyses GMP + diphosphate = guanine + 5-phospho-alpha-D-ribose 1-diphosphate. It functions in the pathway purine metabolism; IMP biosynthesis via salvage pathway; IMP from hypoxanthine: step 1/1. The protein operates within purine metabolism; GMP biosynthesis via salvage pathway; GMP from guanine: step 1/1. Its activity is regulated as follows. Competitively inhibited by acyclic nucleoside phosphonates (ANPs) with Ki values as low as 0.69 uM. Prodrugs of these compounds arrest the growth of a virulent strain of M.tuberculosis with MIC50 values as low as 4.5 uM and possess low cytotoxicity in mammalian cells. Inhibited by pyrrolidine nucleoside bisphosphonates, which are also able to arrest the growth of virulent M.tuberculosis not only in its replicating phase but also in its latent phase, and to arrest the growth of M.tuberculosis in infected macrophages while having low cytotoxicity in mammalian cells. In terms of biological role, purine salvage pathway enzyme that catalyzes the transfer of the ribosyl-5-phosphate group from 5-phospho-alpha-D-ribose 1-diphosphate (PRPP) to the N9 position of the 6-oxopurines hypoxanthine and guanine to form the corresponding ribonucleotides IMP (inosine 5'-monophosphate) and GMP (guanosine 5'-monophosphate), with the release of PPi. Thus, specifically recycles hypoxanthine and guanine imported from the external medium, and converts them to IMP and GMP, respectively. Cannot use xanthine as substrate. This chain is Hypoxanthine-guanine phosphoribosyltransferase, found in Mycobacterium tuberculosis (strain ATCC 25618 / H37Rv).